We begin with the raw amino-acid sequence, 260 residues long: UPF0758 protein Smed_1459 (260 aa).

Residues 138-260 (VLSSWSAVID…HVSLKGLQLF (123 aa)) enclose the MPN domain. Residues His-209, His-211, and Asp-222 each coordinate Zn(2+). The JAMM motif motif lies at 209-222 (HNHPSGDPTPSCAD).

The protein belongs to the UPF0758 family.

This Sinorhizobium medicae (strain WSM419) (Ensifer medicae) protein is UPF0758 protein Smed_1459.